A 395-amino-acid polypeptide reads, in one-letter code: Biotin biosynthesis cytochrome P450 (395 aa).

R60 is a substrate binding site. 89–93 (HRRLR) serves as a coordination point for heme. Residue 169 to 173 (IDFTR) participates in substrate binding. Residues C250 and C275 are joined by a disulfide bond. 285 to 287 (TAR) contacts heme. Y307 lines the substrate pocket. Heme contacts are provided by residues 343–345 (HVC) and C345.

Heme serves as cofactor.

It catalyses the reaction a C2-C8-saturated long-chain fatty acyl-[ACP] + 2 reduced [flavodoxin] + 3 O2 = 6-carboxyhexanoyl-[ACP] + a fatty aldehyde + 2 oxidized [flavodoxin] + 3 H2O + 3 H(+). Its pathway is cofactor biosynthesis; biotin biosynthesis. Catalyzes the C-C bond cleavage of fatty acid linked to acyl carrier protein (ACP) to generate pimelic acid for biotin biosynthesis. It has high affinity for long-chain fatty acids with the greatest affinity for myristic acid. This chain is Biotin biosynthesis cytochrome P450 (bioI), found in Bacillus subtilis (strain 168).